Reading from the N-terminus, the 307-residue chain is MKDESAFFTIDHIIKLDNGQSIRVWETLPKKNVPEKKHTILIASGFARRMDHFAGLAEYLSTNGFHVIRYDSLHHVGLSSGCINEFTMSIGKNSLLTVVDWLTDHGVERIGLIAASLSARIAYEVVNKIKLSFLITAVGVVNLRDTLEKALEYDYLQLPISELPEDLDFEGHNLGSEVFVTDCFKHNWDTLDSTLNSVKGLAIPFIAFTANDDSWVKQSEVIELIDSIESSNCKLYSLIGSSHDLGENLVVLRNFYQSVTKAALALDDGLLDLEIDIIEPRFEDVTSITVKERRLKNEIENELLELA.

Residues Ser-116, Asp-213, and His-243 each act as charge relay system in the active site.

It belongs to the LuxD family.

Its pathway is lipid metabolism; fatty acid reduction for biolumincescence. Its function is as follows. Acyl transferase is part of the fatty acid reductase system required for aldehyde biosynthesis; it produces fatty acids for the luminescent reaction. This Aliivibrio fischeri (Vibrio fischeri) protein is Acyl transferase.